A 382-amino-acid chain; its full sequence is Galactokinase (382 aa).

34–37 (EHTD) is a substrate binding site. 124-130 (GAGLSSS) is an ATP binding site. 2 residues coordinate Mg(2+): S130 and E162. D174 acts as the Proton acceptor in catalysis. Substrate is bound at residue Y223.

Belongs to the GHMP kinase family. GalK subfamily.

The protein localises to the cytoplasm. It catalyses the reaction alpha-D-galactose + ATP = alpha-D-galactose 1-phosphate + ADP + H(+). It functions in the pathway carbohydrate metabolism; galactose metabolism. Catalyzes the transfer of the gamma-phosphate of ATP to D-galactose to form alpha-D-galactose-1-phosphate (Gal-1-P). This Enterobacter sp. (strain 638) protein is Galactokinase.